Reading from the N-terminus, the 320-residue chain is MRSAQVYRWQIPMDAGVVLRDRRLKTRDGLYVCLREGEREGWGEISPLPGFSQETWEEAQSVLLAWVNNWLAGDCELLQMPSIAFGVSCALAELADTLPQAANYRAAPLCNGDPDDLILKLADMPGEKVAKVKVGLYEAVRDGMVVNLLLEAIPDLHLRLDANRAWTPLKGQQFAKYVNPDYRHRIAFLEEPCKTRDDSRAFARETGIAIAWDESLREPDFAFVAEEGVRAVVIKPTLTGSLEKVREQVQAAHALRLTAVISSSIESSLGLTQLARIAAWLTPDTIPGLDTLDLMQAQQVRRWPGSTLPVVEVDALERLL.

Residue Lys-133 is the Proton donor of the active site. 3 residues coordinate Mg(2+): Asp-161, Glu-190, and Asp-213. Lys-235 serves as the catalytic Proton acceptor.

Belongs to the mandelate racemase/muconate lactonizing enzyme family. MenC type 1 subfamily. A divalent metal cation serves as cofactor.

The catalysed reaction is (1R,6R)-6-hydroxy-2-succinyl-cyclohexa-2,4-diene-1-carboxylate = 2-succinylbenzoate + H2O. Its pathway is quinol/quinone metabolism; 1,4-dihydroxy-2-naphthoate biosynthesis; 1,4-dihydroxy-2-naphthoate from chorismate: step 4/7. The protein operates within quinol/quinone metabolism; menaquinone biosynthesis. Its function is as follows. Converts 2-succinyl-6-hydroxy-2,4-cyclohexadiene-1-carboxylate (SHCHC) to 2-succinylbenzoate (OSB). The chain is o-succinylbenzoate synthase from Shigella boydii serotype 4 (strain Sb227).